We begin with the raw amino-acid sequence, 959 residues long: Xylosyltransferase 1 (959 aa).

The Cytoplasmic segment spans residues 1–17 (MVAAPCARRLARRSHSA). A helical; Signal-anchor for type II membrane protein membrane pass occupies residues 18-38 (LLAALTVLLLQTLVVWNFSSL). The Lumenal segment spans residues 39–959 (DSGAGERRGG…GAVKPDGRLR (921 aa)). Residues 42-259 (AGERRGGAAV…KYDQPPKCDI (218 aa)) form a disordered region. Positions 78-104 (RGGGGGGGGGGGGRGPQARARGGGPGE) are enriched in gly residues. The span at 145 to 161 (KVRTDSNNENSVPKDFE) shows a compositional bias: basic and acidic residues. Positions 163–172 (VDNSNFAPRT) are enriched in polar residues. Basic and acidic residues predominate over residues 177–204 (HQPELAKKPPSRQKELLKRKLEQQEKGK). Asn-226 carries an N-linked (GlcNAc...) asparagine glycan. Residues 249–259 (TKYDQPPKCDI) show a composition bias toward basic and acidic residues. 4 disulfide bridges follow: Cys-257–Cys-285, Cys-301–Cys-542, Cys-561–Cys-574, and Cys-563–Cys-572. Residues Val-333, Asp-361, and 390 to 392 (TIW) contribute to the UDP-alpha-D-xylose site. N-linked (GlcNAc...) asparagine glycosylation occurs at Asn-421. Position 494 to 495 (494 to 495 (DW)) interacts with UDP-alpha-D-xylose. UDP-alpha-D-xylose contacts are provided by residues Ser-575 and 598-599 (RK). Cystine bridges form between Cys-675–Cys-927 and Cys-920–Cys-933. N-linked (GlcNAc...) asparagine glycosylation is present at Asn-777. The interval 940 to 959 (SFSPDPKSELGAVKPDGRLR) is disordered.

The protein belongs to the glycosyltransferase 14 family. XylT subfamily. Monomer. The cofactor is a divalent metal cation. In terms of processing, contains 7 disulfide bonds. Post-translationally, N-glycosylated. Widely expressed. Expressed at higher level in placenta, kidney and pancreas. Weakly expressed in skeletal muscle.

The protein resides in the golgi apparatus membrane. It localises to the secreted. It carries out the reaction UDP-alpha-D-xylose + L-seryl-[protein] = 3-O-(beta-D-xylosyl)-L-seryl-[protein] + UDP + H(+). It participates in glycan metabolism; chondroitin sulfate biosynthesis. Its pathway is glycan metabolism; heparan sulfate biosynthesis. In terms of biological role, catalyzes the first step in the biosynthesis of chondroitin sulfate and dermatan sulfate proteoglycans, such as DCN. Transfers D-xylose from UDP-D-xylose to specific serine residues of the core protein. Required for normal embryonic and postnatal skeleton development, especially of the long bones. Required for normal maturation of chondrocytes during bone development, and normal onset of ossification. The sequence is that of Xylosyltransferase 1 (XYLT1) from Homo sapiens (Human).